A 400-amino-acid polypeptide reads, in one-letter code: Formate-dependent phosphoribosylglycinamide formyltransferase (400 aa).

Residues 22–23 (EL) and glutamate 82 each bind N(1)-(5-phospho-beta-D-ribosyl)glycinamide. ATP is bound by residues arginine 115, lysine 156, 161-166 (SSGKGQ), 196-199 (EGFI), and glutamate 204. One can recognise an ATP-grasp domain in the interval 120–309 (RLAAETLGLP…EFALHARAIL (190 aa)). Mg(2+)-binding residues include glutamate 268 and glutamate 280. N(1)-(5-phospho-beta-D-ribosyl)glycinamide-binding positions include aspartate 287, lysine 361, and 368–369 (RR).

This sequence belongs to the PurK/PurT family. As to quaternary structure, homodimer.

The catalysed reaction is N(1)-(5-phospho-beta-D-ribosyl)glycinamide + formate + ATP = N(2)-formyl-N(1)-(5-phospho-beta-D-ribosyl)glycinamide + ADP + phosphate + H(+). The protein operates within purine metabolism; IMP biosynthesis via de novo pathway; N(2)-formyl-N(1)-(5-phospho-D-ribosyl)glycinamide from N(1)-(5-phospho-D-ribosyl)glycinamide (formate route): step 1/1. Its function is as follows. Involved in the de novo purine biosynthesis. Catalyzes the transfer of formate to 5-phospho-ribosyl-glycinamide (GAR), producing 5-phospho-ribosyl-N-formylglycinamide (FGAR). Formate is provided by PurU via hydrolysis of 10-formyl-tetrahydrofolate. The polypeptide is Formate-dependent phosphoribosylglycinamide formyltransferase (Xanthomonas axonopodis pv. citri (strain 306)).